Here is a 464-residue protein sequence, read N- to C-terminus: RCC1-like G exchanging factor-like protein (464 aa).

The N-terminal 37 residues, Met1 to Glu37, are a transit peptide targeting the mitochondrion. RCC1 repeat units lie at residues Ala58–Lys124, Val128–Asp191, Glu193–Asp247, Lys248–Ala300, Gly302–Gly353, Glu354–Asn411, and Lys412–Lys461.

As to quaternary structure, forms a regulatory protein-RNA complex, consisting of RCC1L, NGRN, RPUSD3, RPUSD4, TRUB2, FASTKD2 and 16S mt-rRNA. Interacts with 16S mt-rRNA; this interaction is direct. Interacts with OPA1; this interaction is direct. Asociates with the mitochondrial ribosome large subunit (mt-LSU). In terms of assembly, asociates with the mitochondrial ribosome small subunit (mt-SSU). As to expression, ubiquitous.

The protein resides in the mitochondrion membrane. It localises to the mitochondrion inner membrane. Guanine nucleotide exchange factor (GEF) for mitochondrial dynamin-related GTPase OPA1. Activates OPA1, by exchanging bound GDP for free GTP, and drives OPA1 and MFN1-dependent mitochondrial fusion. Plays an essential role in mitochondrial ribosome biogenesis. As a component of a functional protein-RNA module, consisting of RCC1L, NGRN, RPUSD3, RPUSD4, TRUB2, FASTKD2 and 16S mitochondrial ribosomal RNA (16S mt-rRNA), controls 16S mt-rRNA abundance and is required for intra-mitochondrial translation of core subunits of the oxidative phosphorylation system. Functionally, plays an essential role in mitochondrial ribosome biogenesis via its association with GTPases that play a role in the assembly of the large ribosome subunit. In terms of biological role, plays an essential role in mitochondrial ribosome biogenesis via its association with GTPases that play a role in the assembly of the small ribosome subunit. The chain is RCC1-like G exchanging factor-like protein from Homo sapiens (Human).